Reading from the N-terminus, the 523-residue chain is 2-isopropylmalate synthase (523 aa).

In terms of domain architecture, Pyruvate carboxyltransferase spans valine 5–tryptophan 267. The Mn(2+) site is built by aspartate 14, histidine 202, histidine 204, and asparagine 238. The tract at residues arginine 392–valine 523 is regulatory domain.

This sequence belongs to the alpha-IPM synthase/homocitrate synthase family. LeuA type 1 subfamily. In terms of assembly, homodimer. It depends on Mn(2+) as a cofactor.

The protein resides in the cytoplasm. The catalysed reaction is 3-methyl-2-oxobutanoate + acetyl-CoA + H2O = (2S)-2-isopropylmalate + CoA + H(+). The protein operates within amino-acid biosynthesis; L-leucine biosynthesis; L-leucine from 3-methyl-2-oxobutanoate: step 1/4. Catalyzes the condensation of the acetyl group of acetyl-CoA with 3-methyl-2-oxobutanoate (2-ketoisovalerate) to form 3-carboxy-3-hydroxy-4-methylpentanoate (2-isopropylmalate). In Escherichia coli (strain SMS-3-5 / SECEC), this protein is 2-isopropylmalate synthase.